A 270-amino-acid polypeptide reads, in one-letter code: Tryptophan 2,3-dioxygenase-like protein (270 aa).

This sequence belongs to the tryptophan 2,3-dioxygenase family.

The chain is Tryptophan 2,3-dioxygenase-like protein from Xanthomonas campestris pv. campestris (strain 8004).